Reading from the N-terminus, the 359-residue chain is Membrane-bound lytic murein transglycosylase C (359 aa).

The first 16 residues, 1-16, serve as a signal peptide directing secretion; that stretch reads MKKYLALALIAPLLIS. Cys-17 carries the N-palmitoyl cysteine lipid modification. A lipid anchor (S-diacylglycerol cysteine) is attached at Cys-17.

It belongs to the transglycosylase Slt family.

The protein localises to the cell outer membrane. It catalyses the reaction Exolytic cleavage of the (1-&gt;4)-beta-glycosidic linkage between N-acetylmuramic acid (MurNAc) and N-acetylglucosamine (GlcNAc) residues in peptidoglycan, from either the reducing or the non-reducing ends of the peptidoglycan chains, with concomitant formation of a 1,6-anhydrobond in the MurNAc residue.. Murein-degrading enzyme. May play a role in recycling of muropeptides during cell elongation and/or cell division. The protein is Membrane-bound lytic murein transglycosylase C of Escherichia coli O139:H28 (strain E24377A / ETEC).